We begin with the raw amino-acid sequence, 209 residues long: Ribonuclease HII (209 aa).

The region spanning 20 to 209 is the RNase H type-2 domain; that stretch reads QLEIGIDEVG…KSFLTKLNLI (190 aa). A divalent metal cation-binding residues include Asp26, Glu27, and Asp122.

It belongs to the RNase HII family. It depends on Mn(2+) as a cofactor. Mg(2+) is required as a cofactor.

It localises to the cytoplasm. It carries out the reaction Endonucleolytic cleavage to 5'-phosphomonoester.. Endonuclease that specifically degrades the RNA of RNA-DNA hybrids. This Prochlorococcus marinus (strain MIT 9515) protein is Ribonuclease HII.